The following is a 581-amino-acid chain: Arginine--tRNA ligase (581 aa).

Positions 123–133 (PNVAKEMHVGH) match the 'HIGH' region motif.

The protein belongs to the class-I aminoacyl-tRNA synthetase family. Monomer.

The protein localises to the cytoplasm. It catalyses the reaction tRNA(Arg) + L-arginine + ATP = L-arginyl-tRNA(Arg) + AMP + diphosphate. The chain is Arginine--tRNA ligase from Blochmanniella pennsylvanica (strain BPEN).